The following is a 1213-amino-acid chain: DNA-directed RNA polymerase subunit beta' (1213 aa).

The Zn(2+) site is built by C60, C62, C75, and C78. The Mg(2+) site is built by D450, D452, and D454. Residues C819, C893, C900, and C903 each contribute to the Zn(2+) site.

Belongs to the RNA polymerase beta' chain family. The RNAP catalytic core consists of 2 alpha, 1 beta, 1 beta' and 1 omega subunit. When a sigma factor is associated with the core the holoenzyme is formed, which can initiate transcription. Mg(2+) is required as a cofactor. The cofactor is Zn(2+).

The enzyme catalyses RNA(n) + a ribonucleoside 5'-triphosphate = RNA(n+1) + diphosphate. DNA-dependent RNA polymerase catalyzes the transcription of DNA into RNA using the four ribonucleoside triphosphates as substrates. The sequence is that of DNA-directed RNA polymerase subunit beta' from Streptococcus pyogenes serotype M2 (strain MGAS10270).